We begin with the raw amino-acid sequence, 295 residues long: Transcriptional regulator SirC (295 aa).

Residues 195-292 (EKVYNIIISD…KITPLSFMRT (98 aa)) form the HTH araC/xylS-type domain. DNA-binding regions (H-T-H motif) lie at residues 212 to 233 (AEVAGKLFMSVSSLKRKLAAEE) and 259 to 282 (ISQVATMCGYDTPSYFIAIFKRHF).

Positive regulator of the expression of the invasion-associated type III secretion system encoded within SPI-1 (pathogenicity island 1). This chain is Transcriptional regulator SirC (sirC), found in Salmonella typhimurium (strain SL1344).